Here is a 174-residue protein sequence, read N- to C-terminus: Ferredoxin-2, mitochondrial (174 aa).

A mitochondrion-targeting transit peptide spans 1–43 (MAASMARGVSARVLLRAAGGSWGPRAGHAAVTSRTFGTTGERR). A disordered region spans residues 26-52 (AGHAAVTSRTFGTTGERRAGEEAADSP). In terms of domain architecture, 2Fe-2S ferredoxin-type spans 59–161 (VNVVFVDRSG…GVEFALPKIT (103 aa)). 4 residues coordinate [2Fe-2S] cluster: cysteine 96, cysteine 102, cysteine 105, and cysteine 142.

This sequence belongs to the adrenodoxin/putidaredoxin family. Component of the mitochondrial core iron-sulfur cluster (ISC) complex composed of NFS1, LYRM4, NDUFAB1, ISCU, FXN, and FDX2; this complex is a heterohexamer containing two copies of each monomer. Form a heterodimer complex with NFS1. Interacts (in both their reduced and oxidized states) with the cysteine desulfurase (NFS1:LYRM4) complex; this interaction stimulates cysteine desulfurase activity, and serves as a reductant for Fe-S cluster assembly. [2Fe-2S] cluster is required as a cofactor.

It localises to the mitochondrion. The protein localises to the mitochondrion matrix. In terms of biological role, electron donor, of the core iron-sulfur cluster (ISC) assembly complex, that acts to reduce the persulfide into sulfide during [2Fe-2S] clusters assembly on the scaffolding protein ISCU. The core iron-sulfur cluster (ISC) assembly complex is involved in the de novo synthesis of a [2Fe-2S] cluster, the first step of the mitochondrial iron-sulfur protein biogenesis. This process is initiated by the cysteine desulfurase complex (NFS1:LYRM4:NDUFAB1) that produces persulfide which is delivered on the scaffold protein ISCU in a FXN-dependent manner. Then this complex is stabilized by FDX2 which provides reducing equivalents to accomplish the [2Fe-2S] cluster assembly. Finally, the [2Fe-2S] cluster is transferred from ISCU to chaperone proteins, including HSCB, HSPA9 and GLRX5. Essential for coenzyme Q biosynthesis: together with FDXR, transfers the electrons required for the hydroxylation reaction performed by COQ6. The sequence is that of Ferredoxin-2, mitochondrial from Mus musculus (Mouse).